Consider the following 709-residue polypeptide: Mucin-20 (709 aa).

A signal peptide spans 1–25 (MGCLWGLALPLFFFCWEVGVSGSSA). Residues 57–69 (TQTLSAETSSRAS) are compositionally biased toward polar residues. Disordered regions lie at residues 57–92 (TQTL…ARET) and 170–403 (KGLS…WSPG). A compositionally biased stretch (basic and acidic residues) spans 78–92 (AETRGAKRISPARET). Composition is skewed to low complexity over residues 173 to 182 (SSESSASSDS), 190 to 199 (SRASESSASS), 209 to 218 (SRASESSASS), 228 to 237 (SRASESSASS), 247 to 256 (SRASESSASS), 266 to 275 (SRASESSASS), 285 to 294 (SRASESSASS), 304 to 313 (SRASESSASS), 323 to 332 (SRASESSASS), 342 to 351 (SRASESSASS), 361 to 370 (SRASESSASS), and 380 to 389 (SRASESSASS). 11 consecutive repeat copies span residues 173–192 (SSES…PSRA), 193–211 (SESS…PSRA), 212–230 (SESS…PSRA), 231–249 (SESS…PSRA), 250–268 (SESS…PSRA), 269–287 (SESS…PSRA), 288–306 (SESS…PSRA), 307–325 (SESS…PSRA), 326–344 (SESS…PSRA), 345–363 (SESS…PSRA), and 364–382 (SESS…PSRA). The tract at residues 173–400 (SSESSASSDS…GPHPVITPSW (228 aa)) is 12 X 20 AA approximate tandem repeats of S-S-E-S-S-A-S-S-D-S-P-H-P-V-I-T-P-S-R-A. Residues 383-400 (SESSASSDGPHPVITPSW) form a 12; approximate repeat. A glycan (N-linked (GlcNAc...) asparagine) is linked at Asn-423. 2 disordered regions span residues 434–515 (SSIP…APGA) and 583–657 (NFTP…VSAG). The tract at residues 450-656 (VKASSTSDPP…RTRPTTDVSA (207 aa)) is involved in oligomerization. A compositionally biased stretch (polar residues) spans 474-489 (VTASAETLSTAGTTES). The span at 613–652 (TTTNSSRGTNSTLAKITTSAKTTMKPPTATPTTARTRPTT) shows a compositional bias: low complexity. 2 N-linked (GlcNAc...) asparagine glycosylation sites follow: Asn-616 and Asn-622. An interaction with MET region spans residues 657-709 (GENGGFLLLRLSVASPEDLTDPRVAERLMQQLHRELHAHAPHFQVSLLRVRRG).

In terms of assembly, interacts with MET; oligomerization increases affinity for MET. Highly expressed in kidney, moderately in placenta, lung, prostate, liver, and digestive system. In the kidney, localized in the proximal tubules but not in the glomerulus or distal tubules. Detected in most of the male urogenital tract epithelia, with the exception of epididymis.

It is found in the secreted. It localises to the apical cell membrane. The protein resides in the basolateral cell membrane. Its subcellular location is the cell projection. The protein localises to the microvillus membrane. May regulate MET signaling cascade. Seems to decrease hepatocyte growth factor (HGF)-induced transient MAPK activation. Blocks GRB2 recruitment to MET thus suppressing the GRB2-RAS pathway. Inhibits HGF-induced proliferation of MMP1 and MMP9 expression. In Homo sapiens (Human), this protein is Mucin-20 (MUC20).